The sequence spans 239 residues: MASEELACKLERRLRREEAEESGPQLAPLGAPAPEPKPEPEPPARAPTASADAELSAQLSRRLDINEGAARPRRCRVFNPYTEFPEFSRRLIKDLESMFKLYDAGRDGFIDLMELKLMMEKLGAPQTHLGLKSMIKEVDEDFDGKLSFREFLLIFHKAAAGELQEDSGLMALAKLSEIDVALEGVKGAKNFFEAKVQALSSASKFEAELKAEQDERKREEEERRLRQAAFQKLKANFNT.

Basic and acidic residues predominate over residues 1–18; the sequence is MASEELACKLERRLRREE. Residues 1-53 are disordered; that stretch reads MASEELACKLERRLRREEAEESGPQLAPLGAPAPEPKPEPEPPARAPTASADA. EF-hand domains follow at residues 90 to 125 and 126 to 161; these read RLIK…LGAP and QTHL…AAAG. Residues Asp103, Asp107, Glu114, Asp139, Asp141, Asp143, Lys145, and Glu150 each contribute to the Ca(2+) site. Ser201 carries the phosphoserine modification.

Its subcellular location is the mitochondrion inner membrane. Functionally, acts as a calcium sensor for mitochondrial flash (mitoflash) activation, an event characterized by stochastic bursts of superoxide production. May play a role in neuronal differentiation. The chain is EF-hand domain-containing protein D1 (EFHD1) from Homo sapiens (Human).